Here is a 499-residue protein sequence, read N- to C-terminus: L-arabinose isomerase (499 aa).

Glu-306, Glu-333, His-350, and His-449 together coordinate Mn(2+).

It belongs to the arabinose isomerase family. It depends on Mn(2+) as a cofactor.

It carries out the reaction beta-L-arabinopyranose = L-ribulose. The protein operates within carbohydrate degradation; L-arabinose degradation via L-ribulose; D-xylulose 5-phosphate from L-arabinose (bacterial route): step 1/3. In terms of biological role, catalyzes the conversion of L-arabinose to L-ribulose. This Tolumonas auensis (strain DSM 9187 / NBRC 110442 / TA 4) protein is L-arabinose isomerase.